A 386-amino-acid polypeptide reads, in one-letter code: MFKKTKITILGATGSIGDSTLAVIRETNDFEVFALTAFSNVEKLAELCQEFKPKFAVVPDLSKKQKLQSLVTDVEVLVGESGLEKVSSLAEIDIVMSAIVGIAGLKPTFAAAKAGKKILLANKESLVTAGHLLIDEVVKNNAQLIPVDSEHNAIFQCIDNHDKKCLPEIDKIILTASGGPFRDKQQLHELTDVTPEQACNHPNWQMGRKISVDSSTMVNKALEVIEAYWLFSVSADKIGVLIHPQSVTHSIVRYVDGSYIAQLGVPDMKTPIANAMYYPKRGSVNVESLDFTKYQLTFREACFERFEALKIVFNNLQNKNYAANIVFNAANEELVAAFLNKKIKYLEIIEVNKKVTKELNFENPKNIEEVFEIDRKTREYVDSVLG.

T13, G14, S15, I16, N40, and N122 together coordinate NADPH. Residue K123 coordinates 1-deoxy-D-xylulose 5-phosphate. Position 124 (E124) interacts with NADPH. D148 contacts Mn(2+). S149, E150, S177, and H201 together coordinate 1-deoxy-D-xylulose 5-phosphate. E150 contributes to the Mn(2+) binding site. G207 provides a ligand contact to NADPH. The 1-deoxy-D-xylulose 5-phosphate site is built by S214, N219, K220, and E223. Residue E223 coordinates Mn(2+).

It belongs to the DXR family. Requires Mg(2+) as cofactor. It depends on Mn(2+) as a cofactor.

It carries out the reaction 2-C-methyl-D-erythritol 4-phosphate + NADP(+) = 1-deoxy-D-xylulose 5-phosphate + NADPH + H(+). Its pathway is isoprenoid biosynthesis; isopentenyl diphosphate biosynthesis via DXP pathway; isopentenyl diphosphate from 1-deoxy-D-xylulose 5-phosphate: step 1/6. Catalyzes the NADPH-dependent rearrangement and reduction of 1-deoxy-D-xylulose-5-phosphate (DXP) to 2-C-methyl-D-erythritol 4-phosphate (MEP). This chain is 1-deoxy-D-xylulose 5-phosphate reductoisomerase, found in Francisella tularensis subsp. holarctica (strain OSU18).